Reading from the N-terminus, the 418-residue chain is Serine/threonine transporter SstT (418 aa).

8 helical membrane passes run 21–41 (ILIGLVAGIVLALVSTPAAIA), 49–69 (FVGALKAVAPVLVLMLVIASI), 83–103 (ILFLYVLGAFSAALVAVVVSF), 142–162 (ALLNANYIGILAWAVGLGIAL), 190–210 (FAPLGIFGLVASTIAATGFGA), 217–237 (LLVVLIGCMLLVALVVNPLIV), 299–319 (MAGAAITITVLTLAAVHTLGI), and 331–351 (VVAAVCACGASGVAGGSLLLI).

This sequence belongs to the dicarboxylate/amino acid:cation symporter (DAACS) (TC 2.A.23) family.

It is found in the cell inner membrane. The catalysed reaction is L-serine(in) + Na(+)(in) = L-serine(out) + Na(+)(out). It carries out the reaction L-threonine(in) + Na(+)(in) = L-threonine(out) + Na(+)(out). In terms of biological role, involved in the import of serine and threonine into the cell, with the concomitant import of sodium (symport system). The protein is Serine/threonine transporter SstT of Yersinia pseudotuberculosis serotype O:1b (strain IP 31758).